The sequence spans 450 residues: MRLFGTAGIRGTLWEKVTPELAMKVGMAVGTYKSGKALVGRDGRTSSVMLKNAMISGLLSTGMEVLDADLIPTPALAWGTRKLADAGVMITASHNPPTDNGVKVFNGDGTEFYVEQERGLEEIIFSGNFRKARWDEIKPVRNVEVIPDYINAVLDFVGHETNLKVLYDGANGAGSLVAPYLLREMGAKVLSVNAHVDGHFPGRKPEPRYENIAYLGKLVRELGVDLAIAQDGDADRIAVFDEKGNYVDEDTVIALFAKLYVEEHGGGTVVVSIDTGSRIDAVVERAGGRVVRIPLGQPHDGIKRYKAIFAAEPWKLVHPKFGPWIDPFVTMGLLIKLIDENGPLSELVKEIPTYYLKKANVLCPDEYKAEVVRRAAEEVERKLSSEIKEVLTISGFRIALNDGSWILIRPSGTEPKIRVVAEAPTEKRRDELFEMAYSTVSRIVKEAEKK.

The active-site Phosphoserine intermediate is the serine 93. Residues serine 93, aspartate 231, aspartate 233, and aspartate 235 each coordinate Mg(2+). Residue serine 93 is modified to Phosphoserine; by autocatalysis.

It belongs to the phosphohexose mutase family. Homotetramer. The cofactor is Mg(2+). In terms of processing, activated by phosphorylation.

The enzyme catalyses alpha-D-ribose 1-phosphate = D-ribose 5-phosphate. It catalyses the reaction 2-deoxy-alpha-D-ribose 1-phosphate = 2-deoxy-D-ribose 5-phosphate. In terms of biological role, catalyzes the conversion of deoxyribose 1-phosphate to deoxyribose 5-phosphate. Also shows weak activity with glucose 1-phosphate and mannose 1-phosphate. Could be involved in pentose biosynthesis. This chain is Phosphopentomutase, found in Thermococcus kodakarensis (strain ATCC BAA-918 / JCM 12380 / KOD1) (Pyrococcus kodakaraensis (strain KOD1)).